A 1364-amino-acid polypeptide reads, in one-letter code: Formin-like protein 6 (1364 aa).

In terms of domain architecture, Phosphatase tensin-type spans 9–193; that stretch reads YRKPPDGLLE…HYISRRNVSA (185 aa). The active-site Phosphocysteine intermediate is the Cys-126. A C2 tensin-type domain is found at 199–338; sequence DRALTLDCVI…FRAEVLFSEM (140 aa). Disordered regions lie at residues 614–934, 976–999, and 1317–1364; these read KCTP…NLKP, VLPS…KPEK, and EAEA…ASAK. The segment covering 617-631 has biased composition (pro residues); that stretch reads PSPPPLLPPLAPVVP. Over residues 657 to 690 the composition is skewed to polar residues; the sequence is SFPSLSPTQQKQSTSKLCQTILPTNHQLSSSNIT. Residues 734–743 are compositionally biased toward pro residues; that stretch reads PPAPPPPPLQ. Residues 744–757 show a composition bias toward low complexity; that stretch reads SPSTPRCSPVRTLA. Pro residues-rich tracts occupy residues 774-813 and 856-865; these read GPPP…PAAP and PSPPPPPPPC. Over residues 916-929 the composition is skewed to polar residues; it reads MSRSLQSGQAASRR. The FH2 domain maps to 922–1322; that stretch reads SGQAASRRSN…KALKEAEAEK (401 aa). Residues 1317-1351 show a composition bias toward basic and acidic residues; the sequence is EAEAEKTKKEPENAQKTKEPGNDKAKHNNSIKELD. Residues 1353-1364 show a composition bias toward polar residues; that stretch reads SLQSPAQTASAK.

This sequence belongs to the formin-like family. Class-II subfamily.

This Oryza sativa subsp. japonica (Rice) protein is Formin-like protein 6 (FH6).